A 529-amino-acid chain; its full sequence is Bifunctional purine biosynthesis protein PurH (529 aa).

The MGS-like domain occupies 1-148 (MQQRRPVRRA…KNHKDVAIVV (148 aa)). An N6-acetyllysine modification is found at lysine 287.

Belongs to the PurH family.

The catalysed reaction is (6R)-10-formyltetrahydrofolate + 5-amino-1-(5-phospho-beta-D-ribosyl)imidazole-4-carboxamide = 5-formamido-1-(5-phospho-D-ribosyl)imidazole-4-carboxamide + (6S)-5,6,7,8-tetrahydrofolate. It carries out the reaction IMP + H2O = 5-formamido-1-(5-phospho-D-ribosyl)imidazole-4-carboxamide. It functions in the pathway purine metabolism; IMP biosynthesis via de novo pathway; 5-formamido-1-(5-phospho-D-ribosyl)imidazole-4-carboxamide from 5-amino-1-(5-phospho-D-ribosyl)imidazole-4-carboxamide (10-formyl THF route): step 1/1. Its pathway is purine metabolism; IMP biosynthesis via de novo pathway; IMP from 5-formamido-1-(5-phospho-D-ribosyl)imidazole-4-carboxamide: step 1/1. The sequence is that of Bifunctional purine biosynthesis protein PurH from Escherichia fergusonii (strain ATCC 35469 / DSM 13698 / CCUG 18766 / IAM 14443 / JCM 21226 / LMG 7866 / NBRC 102419 / NCTC 12128 / CDC 0568-73).